Consider the following 525-residue polypeptide: Cytochrome P450 monooxygenase ltmJ (525 aa).

The chain crosses the membrane as a helical span at residues 21–43 (LTWWQTIVSFIIFCIMCSWLPGN). A glycan (N-linked (GlcNAc...) asparagine) is linked at Asn136. Heme is bound at residue Cys465.

The protein belongs to the cytochrome P450 family. Heme serves as cofactor.

The protein localises to the membrane. The protein operates within secondary metabolite biosynthesis. Functionally, cytochrome P450 monooxygenase; part of the gene clusters that mediates the biosynthesis of lolitrems, indole-diterpene mycotoxins that are potent tremorgens in mammals, and are synthesized by clavicipitaceous fungal endophytes in association with their grass hosts. The geranylgeranyl diphosphate (GGPP) synthase ltmG is proposed to catalyze the first step in lolitrem biosynthesis. LtmG catalyzes a series of iterative condensations of isopentenyl diphosphate (IPP) with dimethylallyl diphosphate (DMAPP), geranyl diphosphate (GPP), and farnesyl diphosphate (FPP), to form GGPP. GGPP then condenses with indole-3-glycerol phosphate to form 3-geranylgeranylindole, an acyclic intermediate, to be incorporated into paxilline. Either ltmG or ltmC could be responsible for this step, as both are putative prenyl transferases. The FAD-dependent monooxygenase ltmM then catalyzes the epoxidation of the two terminal alkenes of the geranylgeranyl moiety, which is subsequently cyclized by ltmB, to paspaline. The cytochrome P450 monooxygenases ltmQ and ltmP can sequentially oxidize paspaline to terpendole E and terpendole F. Alternatively, ltmP converts paspaline to an intermediate which is oxidized by ltmQ to terpendole F. LtmF, ltmK, ltmE and ltmJ appear to be unique to the epichloe endophytes. The prenyltransferase ltmF is involved in the 27-hydroxyl-O-prenylation. The cytochrome P450 monooxygenase ltmK is required for the oxidative acetal ring formation. The multi-functional prenyltransferase ltmE is required for C20- and C21-prenylations of the indole ring of paspalanes and acts together with the cytochrome P450 monooxygenase ltmJ to yield lolitremanes by multiple oxidations and ring closures. The stereoisomer pairs of lolitriol and lolitrem N or lolitrem B and lolitrem F may be attributed to variations in the way in which ring closure can occur under the action of ltmJ. While the major product of this pathway is lolitrem B, the prenyl transferases and cytochrome P450 monooxygenases identified in this pathway have a remarkable versatility in their regio- and stereo-specificities to generate a diverse range of metabolites that are products of a metabolic grid rather than a linear pathway. The polypeptide is Cytochrome P450 monooxygenase ltmJ (ltmJ) (Epichloe festucae var. lolii (Neotyphodium lolii)).